A 919-amino-acid polypeptide reads, in one-letter code: Alpha-amylase (919 aa).

An N-terminal signal peptide occupies residues 1-33; it reads MPATRRTARVRRVAAVTVTALAAALLPPLAARA. 2 residues coordinate Ca(2+): N182 and D281. The active-site Nucleophile is the D312. H316 lines the Ca(2+) pocket. E346 serves as the catalytic Proton donor. The disordered stretch occupies residues 704–729; the sequence is ASGRLHHRHPARRGGAHRRLPGPRGR. Positions 707–724 are enriched in basic residues; the sequence is RLHHRHPARRGGAHRRLP.

This sequence belongs to the glycosyl hydrolase 13 family. As to quaternary structure, monomer. It depends on Ca(2+) as a cofactor.

The protein localises to the secreted. It catalyses the reaction Endohydrolysis of (1-&gt;4)-alpha-D-glucosidic linkages in polysaccharides containing three or more (1-&gt;4)-alpha-linked D-glucose units.. The sequence is that of Alpha-amylase (amy) from Streptomyces lividans.